The following is an 85-amino-acid chain: Small ribosomal subunit protein uS17 (85 aa).

The protein belongs to the universal ribosomal protein uS17 family. In terms of assembly, part of the 30S ribosomal subunit.

Its function is as follows. One of the primary rRNA binding proteins, it binds specifically to the 5'-end of 16S ribosomal RNA. This is Small ribosomal subunit protein uS17 from Desulforapulum autotrophicum (strain ATCC 43914 / DSM 3382 / VKM B-1955 / HRM2) (Desulfobacterium autotrophicum).